Here is a 222-residue protein sequence, read N- to C-terminus: MEIPPTHYAASRAASVAENCINYQQGTPHKLFLVQTVQQASKEDIPGRGHKYHLKFSVEEIIQKQVTVNCTAEVLYPQMGQGSAPEVNFTFEGEIGKNPDEEDNTFYQSLMSLKRPLEAQDIPDNFGNVSPQMKPVQHLAWVACGYVMWQNSTEDTWYKMLKIQTVKQVQRNDDFIELDYTILLHDIASQEIIPWQMQVLWHPQYGTKVKHNSRLPKEGQAE.

In terms of domain architecture, Cystatin LXN-type 1 spans 1-97 (MEIPPTHYAA…NFTFEGEIGK (97 aa)). Residue K55 is modified to N6-acetyllysine. An alpha-helical linker region spans residues 98–117 (NPDEEDNTFYQSLMSLKRPL). One can recognise a Cystatin LXN-type 2 domain in the interval 118 to 222 (EAQDIPDNFG…SRLPKEGQAE (105 aa)).

This sequence belongs to the protease inhibitor I47 (latexin) family. Highly enriched in macrophages.

It localises to the cytoplasm. Hardly reversible, non-competitive, and potent inhibitor of CPA1, CPA2 and CPA4. May play a role in inflammation. The protein is Latexin (Lxn) of Mus musculus (Mouse).